Consider the following 281-residue polypeptide: Bifunctional protein FolD (281 aa).

NADP(+) contacts are provided by residues 164 to 166, serine 189, and threonine 230; that span reads GRS.

The protein belongs to the tetrahydrofolate dehydrogenase/cyclohydrolase family. As to quaternary structure, homodimer.

It carries out the reaction (6R)-5,10-methylene-5,6,7,8-tetrahydrofolate + NADP(+) = (6R)-5,10-methenyltetrahydrofolate + NADPH. The catalysed reaction is (6R)-5,10-methenyltetrahydrofolate + H2O = (6R)-10-formyltetrahydrofolate + H(+). Its pathway is one-carbon metabolism; tetrahydrofolate interconversion. In terms of biological role, catalyzes the oxidation of 5,10-methylenetetrahydrofolate to 5,10-methenyltetrahydrofolate and then the hydrolysis of 5,10-methenyltetrahydrofolate to 10-formyltetrahydrofolate. The chain is Bifunctional protein FolD from Dictyoglomus turgidum (strain DSM 6724 / Z-1310).